The sequence spans 360 residues: Mitogen-activated protein kinase 14 (360 aa).

Position 2 is an N-acetylserine (Ser2). At Ser2 the chain carries Phosphoserine. Position 16 is a phosphothreonine (Thr16). In terms of domain architecture, Protein kinase spans 24–308; it reads YQNLSPVGSG…AAQALAHAYF (285 aa). ATP contacts are provided by residues 30 to 38 and Lys53; that span reads VGSGAYGSV. Lys53 carries the N6-acetyllysine modification. Catalysis depends on Asp150, which acts as the Proton acceptor. The residue at position 152 (Lys152) is an N6-acetyllysine. The residue at position 180 (Thr180) is a Phosphothreonine; by MAP2K3, MAP2K4, MAP2K6 and autocatalysis. Residues 180–182 carry the TXY motif; sequence TGY. The residue at position 182 (Tyr182) is a Phosphotyrosine; by MAP2K3, MAP2K4, MAP2K6 and autocatalysis. Residue Thr263 is modified to Phosphothreonine. Tyr323 carries the post-translational modification Phosphotyrosine; by ZAP70.

This sequence belongs to the protein kinase superfamily. CMGC Ser/Thr protein kinase family. MAP kinase subfamily. As to quaternary structure, component of a signaling complex containing at least AKAP13, PKN1, MAPK14, ZAK and MAP2K3. Within this complex, AKAP13 interacts directly with PKN1, which in turn recruits MAPK14, MAP2K3 and ZAK. Binds to a kinase interaction motif within the protein tyrosine phosphatase, PTPRR. This interaction retains MAPK14 in the cytoplasm and prevents nuclear accumulation. Interacts with SPAG9 and GADD45A. Interacts with CDC25B, CDC25C, DUSP1, DUSP10, DUSP16, NP60, SUPT20H and TAB1. Interacts with casein kinase II subunits CSNK2A1 and CSNK2B. Interacts with PPM1D. Interacts with CDK5RAP3; recruits PPM1D to MAPK14 and may regulate its dephosphorylation. Interacts with DUSP2; this interaction does not lead to catalytic activation of DUSP2 and dephosphrylation of MAPK14. It depends on Mg(2+) as a cofactor. Dually phosphorylated on Thr-180 and Tyr-182 by the MAP2Ks MAP2K3/MKK3, MAP2K4/MKK4 and MAP2K6/MKK6 in response to inflammatory citokines, environmental stress or growth factors, which activates the enzyme. Dual phosphorylation can also be mediated by TAB1-mediated autophosphorylation. TCR engagement in T-cells also leads to Tyr-323 phosphorylation by ZAP70. Dephosphorylated and inactivated by DUPS1, DUSP10 and DUSP16. PPM1D also mediates dephosphorylation and inactivation of MAPK14. In terms of processing, acetylated at Lys-53 and Lys-152 by KAT2B and EP300. Acetylation at Lys-53 increases the affinity for ATP and enhances kinase activity. Lys-53 and Lys-152 are deacetylated by HDAC3. Post-translationally, ubiquitinated. Ubiquitination leads to degradation by the proteasome pathway.

It is found in the cytoplasm. It localises to the nucleus. The catalysed reaction is L-seryl-[protein] + ATP = O-phospho-L-seryl-[protein] + ADP + H(+). It carries out the reaction L-threonyl-[protein] + ATP = O-phospho-L-threonyl-[protein] + ADP + H(+). Activated by cell stresses such as DNA damage, heat shock, osmotic shock, anisomycin and sodium arsenite, as well as pro-inflammatory stimuli such as bacterial lipopolysaccharide (LPS) and interleukin-1. Activation occurs through dual phosphorylation of Thr-180 and Tyr-182 by either of two dual specificity kinases, MAP2K3/MKK3 or MAP2K6/MKK6, and potentially also MAP2K4/MKK4, as well as by TAB1-mediated autophosphorylation. MAPK14 phosphorylated on both Thr-180 and Tyr-182 is 10-20-fold more active than MAPK14 phosphorylated only on Thr-180, whereas MAPK14 phosphorylated on Tyr-182 alone is inactive. whereas Thr-180 is necessary for catalysis, Tyr-182 may be required for auto-activation and substrate recognition. Phosphorylated at Tyr-323 by ZAP70 in an alternative activation pathway in response to TCR signaling in T-cells. This alternative pathway is inhibited by GADD45A. Inhibited by dual specificity phosphatases, such as DUSP1, DUSP10, and DUSP16. Specifically inhibited by the binding of pyridinyl-imidazole compounds, which are cytokine-suppressive anti-inflammatory drugs (CSAID). SB203580 is an inhibitor of MAPK14. Functionally, serine/threonine kinase which acts as an essential component of the MAP kinase signal transduction pathway. MAPK14 is one of the four p38 MAPKs which play an important role in the cascades of cellular responses evoked by extracellular stimuli such as pro-inflammatory cytokines or physical stress leading to direct activation of transcription factors. Accordingly, p38 MAPKs phosphorylate a broad range of proteins and it has been estimated that they may have approximately 200 to 300 substrates each. Some of the targets are downstream kinases which are activated through phosphorylation and further phosphorylate additional targets. RPS6KA5/MSK1 and RPS6KA4/MSK2 can directly phosphorylate and activate transcription factors such as CREB1, ATF1, the NF-kappa-B isoform RELA/NFKB3, STAT1 and STAT3, but can also phosphorylate histone H3 and the nucleosomal protein HMGN1. RPS6KA5/MSK1 and RPS6KA4/MSK2 play important roles in the rapid induction of immediate-early genes in response to stress or mitogenic stimuli, either by inducing chromatin remodeling or by recruiting the transcription machinery. On the other hand, two other kinase targets, MAPKAPK2/MK2 and MAPKAPK3/MK3, participate in the control of gene expression mostly at the post-transcriptional level, by phosphorylating ZFP36 (tristetraprolin) and ELAVL1, and by regulating EEF2K, which is important for the elongation of mRNA during translation. MKNK1/MNK1 and MKNK2/MNK2, two other kinases activated by p38 MAPKs, regulate protein synthesis by phosphorylating the initiation factor EIF4E2. MAPK14 also interacts with casein kinase II, leading to its activation through autophosphorylation and further phosphorylation of TP53/p53. In the cytoplasm, the p38 MAPK pathway is an important regulator of protein turnover. For example, CFLAR is an inhibitor of TNF-induced apoptosis whose proteasome-mediated degradation is regulated by p38 MAPK phosphorylation. In a similar way, MAPK14 phosphorylates the ubiquitin ligase SIAH2, regulating its activity towards EGLN3. MAPK14 may also inhibit the lysosomal degradation pathway of autophagy by interfering with the intracellular trafficking of the transmembrane protein ATG9. Another function of MAPK14 is to regulate the endocytosis of membrane receptors by different mechanisms that impinge on the small GTPase RAB5A. In addition, clathrin-mediated EGFR internalization induced by inflammatory cytokines and UV irradiation depends on MAPK14-mediated phosphorylation of EGFR itself as well as of RAB5A effectors. Ectodomain shedding of transmembrane proteins is regulated by p38 MAPKs as well. In response to inflammatory stimuli, p38 MAPKs phosphorylate the membrane-associated metalloprotease ADAM17. Such phosphorylation is required for ADAM17-mediated ectodomain shedding of TGF-alpha family ligands, which results in the activation of EGFR signaling and cell proliferation. Another p38 MAPK substrate is FGFR1. FGFR1 can be translocated from the extracellular space into the cytosol and nucleus of target cells, and regulates processes such as rRNA synthesis and cell growth. FGFR1 translocation requires p38 MAPK activation. In the nucleus, many transcription factors are phosphorylated and activated by p38 MAPKs in response to different stimuli. Classical examples include ATF1, ATF2, ATF6, ELK1, PTPRH, DDIT3, TP53/p53 and MEF2C and MEF2A. The p38 MAPKs are emerging as important modulators of gene expression by regulating chromatin modifiers and remodelers. The promoters of several genes involved in the inflammatory response, such as IL6, IL8 and IL12B, display a p38 MAPK-dependent enrichment of histone H3 phosphorylation on 'Ser-10' (H3S10ph) in LPS-stimulated myeloid cells. This phosphorylation enhances the accessibility of the cryptic NF-kappa-B-binding sites marking promoters for increased NF-kappa-B recruitment. Phosphorylates CDC25B and CDC25C which is required for binding to 14-3-3 proteins and leads to initiation of a G2 delay after ultraviolet radiation. Phosphorylates TIAR following DNA damage, releasing TIAR from GADD45A mRNA and preventing mRNA degradation. The p38 MAPKs may also have kinase-independent roles, which are thought to be due to the binding to targets in the absence of phosphorylation. Protein O-Glc-N-acylation catalyzed by the OGT is regulated by MAPK14, and, although OGT does not seem to be phosphorylated by MAPK14, their interaction increases upon MAPK14 activation induced by glucose deprivation. This interaction may regulate OGT activity by recruiting it to specific targets such as neurofilament H, stimulating its O-Glc-N-acylation. Required in mid-fetal development for the growth of embryo-derived blood vessels in the labyrinth layer of the placenta. Also plays an essential role in developmental and stress-induced erythropoiesis, through regulation of EPO gene expression. Phosphorylates S100A9 at 'Thr-113'. This Canis lupus familiaris (Dog) protein is Mitogen-activated protein kinase 14.